The primary structure comprises 512 residues: Polyamine aminopropyltransferase (512 aa).

The next 7 helical transmembrane spans lie at 19 to 39, 48 to 68, 76 to 96, 108 to 128, 151 to 171, 172 to 192, and 199 to 219; these read IVSI…SYIL, LTIS…EKFM, VWIE…MFGI, YLYS…PILI, AGGL…FGMV, KTAF…LWLF, and FIVH…GLFF. Residues 215–450 form the PABS domain; the sequence is AGLFFGEEMA…GNWGFVMASR (236 aa). The tract at residues 217 to 457 is spermidine synthase; sequence LFFGEEMAFN…ASREEIDLDI (241 aa). Position 245 (Gln-245) interacts with S-methyl-5'-thioadenosine. 2 residues coordinate spermidine: His-275 and Asp-299. Residues Asp-319 and 353 to 354 contribute to the S-methyl-5'-thioadenosine site; that span reads DA. The Proton acceptor role is filled by Asp-371.

This sequence belongs to the spermidine/spermine synthase family. As to quaternary structure, homodimer or homotetramer.

The protein localises to the cell membrane. The enzyme catalyses S-adenosyl 3-(methylsulfanyl)propylamine + putrescine = S-methyl-5'-thioadenosine + spermidine + H(+). Its pathway is amine and polyamine biosynthesis; spermidine biosynthesis; spermidine from putrescine: step 1/1. In terms of biological role, catalyzes the irreversible transfer of a propylamine group from the amino donor S-adenosylmethioninamine (decarboxy-AdoMet) to putrescine (1,4-diaminobutane) to yield spermidine. The polypeptide is Polyamine aminopropyltransferase (Oceanobacillus iheyensis (strain DSM 14371 / CIP 107618 / JCM 11309 / KCTC 3954 / HTE831)).